The sequence spans 235 residues: Putative uridine kinase C227.14 (235 aa).

Residue Gly36 to Ser43 coordinates ATP.

The protein belongs to the uridine kinase family.

The protein resides in the cytoplasm. Its subcellular location is the nucleus. The catalysed reaction is uridine + ATP = UMP + ADP + H(+). It carries out the reaction cytidine + ATP = CMP + ADP + H(+). The protein operates within pyrimidine metabolism; CTP biosynthesis via salvage pathway; CTP from cytidine: step 1/3. Its pathway is pyrimidine metabolism; UMP biosynthesis via salvage pathway; UMP from uridine: step 1/1. In Schizosaccharomyces pombe (strain 972 / ATCC 24843) (Fission yeast), this protein is Putative uridine kinase C227.14.